The primary structure comprises 251 residues: Imidazole glycerol phosphate synthase subunit HisF (251 aa).

Residues Asp-11 and Asp-130 contribute to the active site.

The protein belongs to the HisA/HisF family. Heterodimer of HisH and HisF.

It localises to the cytoplasm. The catalysed reaction is 5-[(5-phospho-1-deoxy-D-ribulos-1-ylimino)methylamino]-1-(5-phospho-beta-D-ribosyl)imidazole-4-carboxamide + L-glutamine = D-erythro-1-(imidazol-4-yl)glycerol 3-phosphate + 5-amino-1-(5-phospho-beta-D-ribosyl)imidazole-4-carboxamide + L-glutamate + H(+). It participates in amino-acid biosynthesis; L-histidine biosynthesis; L-histidine from 5-phospho-alpha-D-ribose 1-diphosphate: step 5/9. Functionally, IGPS catalyzes the conversion of PRFAR and glutamine to IGP, AICAR and glutamate. The HisF subunit catalyzes the cyclization activity that produces IGP and AICAR from PRFAR using the ammonia provided by the HisH subunit. This is Imidazole glycerol phosphate synthase subunit HisF from Listeria monocytogenes serotype 4b (strain CLIP80459).